A 101-amino-acid polypeptide reads, in one-letter code: UPF0235 protein Cphamn1_2066 (101 aa).

This sequence belongs to the UPF0235 family.

This chain is UPF0235 protein Cphamn1_2066, found in Chlorobium phaeobacteroides (strain BS1).